We begin with the raw amino-acid sequence, 247 residues long: tRNA pseudouridine synthase A (247 aa).

Asp53 serves as the catalytic Nucleophile. Tyr112 serves as a coordination point for substrate.

This sequence belongs to the tRNA pseudouridine synthase TruA family. As to quaternary structure, homodimer.

It catalyses the reaction uridine(38/39/40) in tRNA = pseudouridine(38/39/40) in tRNA. Its function is as follows. Formation of pseudouridine at positions 38, 39 and 40 in the anticodon stem and loop of transfer RNAs. This is tRNA pseudouridine synthase A from Anaplasma marginale (strain St. Maries).